A 159-amino-acid polypeptide reads, in one-letter code: MSRISHITLDDSGLPPPTPEIEQERKVAMFDLLEDNTFVLPPREGRPVPEGPYHVSLAIRDKRLVFDVNTETAEKAAEFHLSLGPFRQVVKDYFQICESYFDAVKKLPPSQIETIDMARRGIHNEGSRVLQERLEGKADIDIDTARRLFTLICVLHFGG.

It belongs to the UPF0262 family.

The sequence is that of UPF0262 protein RD1_1069 from Roseobacter denitrificans (strain ATCC 33942 / OCh 114) (Erythrobacter sp. (strain OCh 114)).